The following is an 88-amino-acid chain: Small ribosomal subunit protein bS20 (88 aa).

The segment at 1–27 is disordered; that stretch reads MANTKQAQKRARQAEQRRQHNASQRSM.

It belongs to the bacterial ribosomal protein bS20 family.

Binds directly to 16S ribosomal RNA. This Chromohalobacter salexigens (strain ATCC BAA-138 / DSM 3043 / CIP 106854 / NCIMB 13768 / 1H11) protein is Small ribosomal subunit protein bS20.